The sequence spans 83 residues: Molybdopterin synthase sulfur carrier subunit (83 aa).

It belongs to the MoaD family.

It participates in cofactor biosynthesis; molybdopterin biosynthesis. Functionally, involved in sulfur transfer in the conversion of molybdopterin precursor Z to molybdopterin. Probably plays a role in host phagosome maturation arrest. The protein is Molybdopterin synthase sulfur carrier subunit (moaD1) of Mycobacterium tuberculosis (strain ATCC 25618 / H37Rv).